Consider the following 221-residue polypeptide: Chalcone--flavanone isomerase (221 aa).

The substrate site is built by Thr-47, Asn-112, and Ser-189.

The protein belongs to the chalcone isomerase family.

It carries out the reaction a chalcone = a flavanone.. It functions in the pathway secondary metabolite biosynthesis; flavonoid biosynthesis. In terms of biological role, catalyzes the intramolecular cyclization of bicyclic chalcones into tricyclic (S)-flavanones. Responsible for the isomerization of 4,2',4',6'-tetrahydroxychalcone (also termed chalcone) into naringenin. The polypeptide is Chalcone--flavanone isomerase (CHI) (Dianthus caryophyllus (Carnation)).